A 390-amino-acid chain; its full sequence is Alkanesulfonate monooxygenase (390 aa).

Belongs to the SsuD family.

The catalysed reaction is an alkanesulfonate + FMNH2 + O2 = an aldehyde + FMN + sulfite + H2O + 2 H(+). Functionally, catalyzes the desulfonation of aliphatic sulfonates. This is Alkanesulfonate monooxygenase from Cupriavidus taiwanensis (strain DSM 17343 / BCRC 17206 / CCUG 44338 / CIP 107171 / LMG 19424 / R1) (Ralstonia taiwanensis (strain LMG 19424)).